The primary structure comprises 125 residues: Glycoprotein hormones alpha chain (125 aa).

Positions 1–30 (MVSAVTTMGCMKAAGVSLLLLYFLLNAADS) are cleaved as a signal peptide. 5 cysteine pairs are disulfide-bonded: C41–C64, C44–C93, C61–C114, C65–C116, and C92–C119. N-linked (GlcNAc...) asparagine glycans are attached at residues N85 and N110.

It belongs to the glycoprotein hormones subunit alpha family. Heterodimer. Glycoprotein hormones are heterodimers composed of a common alpha chain described here and a unique beta chain which confers their biological specificity to the different hormones.

Its subcellular location is the secreted. Shared alpha chain of heterodimeric glycoprotein hormones. These hormones bind specific receptors on target cells that in turn activate downstream signaling pathways. Involved in gametogenesis and steroidogenesis. This Fundulus heteroclitus (Killifish) protein is Glycoprotein hormones alpha chain (cga).